The primary structure comprises 225 residues: Heptaprenylglyceryl phosphate synthase (225 aa).

Position 6 (Lys-6) interacts with sn-glycerol 1-phosphate. Residues Asp-8 and Thr-34 each contribute to the Mg(2+) site. Sn-glycerol 1-phosphate is bound by residues 153 to 158 (YIEYSG), Gly-183, and 203 to 204 (GN).

It belongs to the GGGP/HepGP synthase family. Group I subfamily. Homodimer. Mg(2+) is required as a cofactor.

It carries out the reaction sn-glycerol 1-phosphate + all-trans-heptaprenyl diphosphate = 3-heptaprenyl-sn-glycero-1-phosphate + diphosphate. It functions in the pathway membrane lipid metabolism; glycerophospholipid metabolism. Functionally, prenyltransferase that catalyzes in vivo the transfer of the heptaprenyl moiety of heptaprenyl pyrophosphate (HepPP; 35 carbon atoms) to the C3 hydroxyl of sn-glycerol-1-phosphate (G1P), producing heptaprenylglyceryl phosphate (HepGP). This reaction is an ether-bond-formation step in the biosynthesis of archaea-type G1P-based membrane lipids found in Bacillales. This is Heptaprenylglyceryl phosphate synthase from Listeria welshimeri serovar 6b (strain ATCC 35897 / DSM 20650 / CCUG 15529 / CIP 8149 / NCTC 11857 / SLCC 5334 / V8).